Here is a 416-residue protein sequence, read N- to C-terminus: Formyl-CoA:oxalate CoA-transferase (416 aa).

CoA-binding positions include 17 to 18 (QS), R38, 72 to 75 (LNTK), 96 to 98 (NFH), H104, and 137 to 140 (KAYE). D169 (nucleophile) is an active-site residue. 248–250 (GGQ) is a substrate binding site. 273–275 (QEQ) lines the CoA pocket.

Belongs to the CoA-transferase III family. Frc subfamily. As to quaternary structure, homodimer.

It carries out the reaction formyl-CoA + oxalate = oxalyl-CoA + formate. The protein operates within metabolic intermediate degradation; oxalate degradation; CO(2) and formate from oxalate: step 1/2. Involved in the catabolism of oxalate and in the adapatation to low pH via the induction of the oxalate-dependent acid tolerance response (ATR). Catalyzes the transfer of the CoA moiety from formyl-CoA to oxalate. The sequence is that of Formyl-CoA:oxalate CoA-transferase from Shigella boydii serotype 18 (strain CDC 3083-94 / BS512).